Consider the following 1378-residue polypeptide: DNA-directed RNA polymerase subunit beta (1378 aa).

Belongs to the RNA polymerase beta chain family. In terms of assembly, the RNAP catalytic core consists of 2 alpha, 1 beta, 1 beta' and 1 omega subunit. When a sigma factor is associated with the core the holoenzyme is formed, which can initiate transcription.

The catalysed reaction is RNA(n) + a ribonucleoside 5'-triphosphate = RNA(n+1) + diphosphate. Functionally, DNA-dependent RNA polymerase catalyzes the transcription of DNA into RNA using the four ribonucleoside triphosphates as substrates. The chain is DNA-directed RNA polymerase subunit beta from Dinoroseobacter shibae (strain DSM 16493 / NCIMB 14021 / DFL 12).